The following is a 57-amino-acid chain: Large ribosomal subunit protein bL32 (57 aa).

Residues 1–22 show a composition bias toward basic residues; that stretch reads MAVPKKKTSKAKRDQRRAHWRR. Residues 1-35 are disordered; the sequence is MAVPKKKTSKAKRDQRRAHWRRQASSQAQKALSLG.

The protein belongs to the bacterial ribosomal protein bL32 family.

This is Large ribosomal subunit protein bL32 (rpmF) from Synechocystis sp. (strain ATCC 27184 / PCC 6803 / Kazusa).